The primary structure comprises 290 residues: Glutamate racemase (290 aa).

Residues 32-33 (DS) and 64-65 (YG) each bind substrate. Residue cysteine 96 is the Proton donor/acceptor of the active site. 97–98 (NT) serves as a coordination point for substrate. Cysteine 208 serves as the catalytic Proton donor/acceptor. 209–210 (TH) contacts substrate.

Belongs to the aspartate/glutamate racemases family.

It catalyses the reaction L-glutamate = D-glutamate. Its pathway is cell wall biogenesis; peptidoglycan biosynthesis. In terms of biological role, provides the (R)-glutamate required for cell wall biosynthesis. In Sodalis glossinidius (strain morsitans), this protein is Glutamate racemase.